A 463-amino-acid chain; its full sequence is UDP-N-acetylmuramate--L-alanine ligase (463 aa).

112–118 (GTHGKTT) lines the ATP pocket.

The protein belongs to the MurCDEF family.

Its subcellular location is the cytoplasm. The catalysed reaction is UDP-N-acetyl-alpha-D-muramate + L-alanine + ATP = UDP-N-acetyl-alpha-D-muramoyl-L-alanine + ADP + phosphate + H(+). It participates in cell wall biogenesis; peptidoglycan biosynthesis. Functionally, cell wall formation. This chain is UDP-N-acetylmuramate--L-alanine ligase, found in Thiobacillus denitrificans (strain ATCC 25259 / T1).